A 119-amino-acid chain; its full sequence is Large ribosomal subunit protein bL19 (119 aa).

Belongs to the bacterial ribosomal protein bL19 family.

This protein is located at the 30S-50S ribosomal subunit interface and may play a role in the structure and function of the aminoacyl-tRNA binding site. In Petrotoga mobilis (strain DSM 10674 / SJ95), this protein is Large ribosomal subunit protein bL19.